The primary structure comprises 196 residues: MLIAVEGIDGAGKTTIAAYIAELLKEKGYKVKVLKEPGDSKFGKKIKSSEERLSPEEELELFLKDREIDARENILPALQSGYAVVMDRYYFSNIAYQSARGIDARLIREMNEKIAPKPDLTILLDVEPEIALERVRKRGKLSPFEKLDYLRKVRKCFLENADETTVVVDASKPLEEVKEEVRKVIESFLNLKKNSN.

Gly7 to Thr14 contacts ATP.

It belongs to the thymidylate kinase family.

It catalyses the reaction dTMP + ATP = dTDP + ADP. The protein is Probable thymidylate kinase (tmk) of Archaeoglobus fulgidus (strain ATCC 49558 / DSM 4304 / JCM 9628 / NBRC 100126 / VC-16).